We begin with the raw amino-acid sequence, 417 residues long: 4-hydroxy-3-methylbut-2-en-1-yl diphosphate synthase (flavodoxin) (417 aa).

The [4Fe-4S] cluster site is built by cysteine 307, cysteine 310, cysteine 353, and glutamate 360.

The protein belongs to the IspG family. [4Fe-4S] cluster is required as a cofactor.

It carries out the reaction (2E)-4-hydroxy-3-methylbut-2-enyl diphosphate + oxidized [flavodoxin] + H2O + 2 H(+) = 2-C-methyl-D-erythritol 2,4-cyclic diphosphate + reduced [flavodoxin]. It functions in the pathway isoprenoid biosynthesis; isopentenyl diphosphate biosynthesis via DXP pathway; isopentenyl diphosphate from 1-deoxy-D-xylulose 5-phosphate: step 5/6. Functionally, converts 2C-methyl-D-erythritol 2,4-cyclodiphosphate (ME-2,4cPP) into 1-hydroxy-2-methyl-2-(E)-butenyl 4-diphosphate. This chain is 4-hydroxy-3-methylbut-2-en-1-yl diphosphate synthase (flavodoxin), found in Xylella fastidiosa (strain 9a5c).